Reading from the N-terminus, the 82-residue chain is ATP synthase subunit c, chloroplastic (82 aa).

2 helical membrane-spanning segments follow: residues proline 3–glycine 23 and phenylalanine 57–alanine 77.

The protein belongs to the ATPase C chain family. In terms of assembly, F-type ATPases have 2 components, F(1) - the catalytic core - and F(0) - the membrane proton channel. F(1) has five subunits: alpha(3), beta(3), gamma(1), delta(1), epsilon(1). F(0) has four main subunits: a(1), b(1), b'(1) and c(10-14). The alpha and beta chains form an alternating ring which encloses part of the gamma chain. F(1) is attached to F(0) by a central stalk formed by the gamma and epsilon chains, while a peripheral stalk is formed by the delta, b and b' chains.

It localises to the plastid. Its subcellular location is the chloroplast thylakoid membrane. Functionally, f(1)F(0) ATP synthase produces ATP from ADP in the presence of a proton or sodium gradient. F-type ATPases consist of two structural domains, F(1) containing the extramembraneous catalytic core and F(0) containing the membrane proton channel, linked together by a central stalk and a peripheral stalk. During catalysis, ATP synthesis in the catalytic domain of F(1) is coupled via a rotary mechanism of the central stalk subunits to proton translocation. Its function is as follows. Key component of the F(0) channel; it plays a direct role in translocation across the membrane. A homomeric c-ring of between 10-14 subunits forms the central stalk rotor element with the F(1) delta and epsilon subunits. This Chlorella vulgaris (Green alga) protein is ATP synthase subunit c, chloroplastic.